The following is a 155-amino-acid chain: Small ribosomal subunit protein uS7 (155 aa).

This sequence belongs to the universal ribosomal protein uS7 family. In terms of assembly, part of the 30S ribosomal subunit. Contacts proteins S9 and S11.

Functionally, one of the primary rRNA binding proteins, it binds directly to 16S rRNA where it nucleates assembly of the head domain of the 30S subunit. Is located at the subunit interface close to the decoding center, probably blocks exit of the E-site tRNA. This Mycoplasma genitalium (strain ATCC 33530 / DSM 19775 / NCTC 10195 / G37) (Mycoplasmoides genitalium) protein is Small ribosomal subunit protein uS7.